The primary structure comprises 133 residues: Ribosome-binding factor A (133 aa).

It belongs to the RbfA family. As to quaternary structure, monomer. Binds 30S ribosomal subunits, but not 50S ribosomal subunits or 70S ribosomes.

It localises to the cytoplasm. In terms of biological role, one of several proteins that assist in the late maturation steps of the functional core of the 30S ribosomal subunit. Associates with free 30S ribosomal subunits (but not with 30S subunits that are part of 70S ribosomes or polysomes). Required for efficient processing of 16S rRNA. May interact with the 5'-terminal helix region of 16S rRNA. The sequence is that of Ribosome-binding factor A from Citrobacter koseri (strain ATCC BAA-895 / CDC 4225-83 / SGSC4696).